Reading from the N-terminus, the 635-residue chain is MAGUK p55 subfamily member 4 (635 aa).

Residues 1–16 (MRQSDRGAELTNEDRA) are compositionally biased toward basic and acidic residues. Residues 1–23 (MRQSDRGAELTNEDRALPTPPDP) form a disordered region. L27 domains lie at 23–79 (PENG…EKKL) and 86–136 (AQIL…FEPL). Residues 153–234 (IVCLVKNQQP…TIMFKVIPVS (82 aa)) enclose the PDZ domain. Residues 241–311 (QKMVYVRAMI…PSNHLLKRKQ (71 aa)) form the SH3 domain. Residues 426–615 (HRLIVLVGPS…ACGQLLSAIQ (190 aa)) enclose the Guanylate kinase-like domain. The stretch at 567–622 (VDMKFKDEDLQEMEELAQKMESQFGQFFDHVIVNDNLQDACGQLLSAIQKAQEELQ) forms a coiled coil.

This sequence belongs to the MAGUK family. In terms of assembly, may interact with GRIA2. Interacts with MPDZ. Forms a complex with CRB1 and PALS1. Interacts with FASLG. As to expression, detected in the retina (at protein level). Highly enriched in the retina where it is mainly expressed by rod photoreceptors; detected in the inner segment of the photoreceptor layer and in the outer nuclear layer. Also detected at much lower levels in pineal gland, cerebellum, cortex, hippocampus, olfactory bulb, heart, liver and spleen. Expressed in the CA1-CA3 regions of pyramidal cell layers and in the granule cell layer of dentate gyrus in the hippocampus. In the cerebellum, expressed in Purkinje cells and throughout the granule cell layer. In the olfactory bulb, expressed in mitral cells.

The protein localises to the cytoplasm. Its function is as follows. May play a role in retinal photoreceptors development. The sequence is that of MAGUK p55 subfamily member 4 (Mpp4) from Mus musculus (Mouse).